A 123-amino-acid chain; its full sequence is WAP four-disulfide core domain protein 5 (123 aa).

The N-terminal stretch at 1–24 is a signal peptide; that stretch reads MRIQSLLLLGALLAVGSQLPAVFG. WAP domains follow at residues 27–73 and 74–121; these read KGEK…CVPR and VSVK…RDPA. 8 cysteine pairs are disulfide-bonded: Cys-34–Cys-62, Cys-41–Cys-66, Cys-49–Cys-61, Cys-55–Cys-70, Cys-81–Cys-109, Cys-88–Cys-113, Cys-96–Cys-108, and Cys-102–Cys-117.

It localises to the secreted. Its function is as follows. Putative acid-stable proteinase inhibitor. This is WAP four-disulfide core domain protein 5 (WFDC5) from Chlorocebus aethiops (Green monkey).